The sequence spans 462 residues: Chromosomal replication initiator protein DnaA (462 aa).

The domain I, interacts with DnaA modulators stretch occupies residues 1-84 (MAVSLWQQCI…RFDIGSRPSA (84 aa)). Positions 84–125 (APRPVQATAAVERPKFEQNTKPAKTSFNVNSPEPAMAANHRS) are domain II. Residues 126–342 (NINRTYQFEN…GALNRVIANA (217 aa)) form a domain III, AAA+ region region. G170, G172, K173, and T174 together coordinate ATP. The domain IV, binds dsDNA stretch occupies residues 343–462 (NFTGRPITID…YANLIRTLSS (120 aa)).

This sequence belongs to the DnaA family. As to quaternary structure, oligomerizes as a right-handed, spiral filament on DNA at oriC.

It localises to the cytoplasm. Plays an essential role in the initiation and regulation of chromosomal replication. ATP-DnaA binds to the origin of replication (oriC) to initiate formation of the DNA replication initiation complex once per cell cycle. Binds the DnaA box (a 9 base pair repeat at the origin) and separates the double-stranded (ds)DNA. Forms a right-handed helical filament on oriC DNA; dsDNA binds to the exterior of the filament while single-stranded (ss)DNA is stabiized in the filament's interior. The ATP-DnaA-oriC complex binds and stabilizes one strand of the AT-rich DNA unwinding element (DUE), permitting loading of DNA polymerase. After initiation quickly degrades to an ADP-DnaA complex that is not apt for DNA replication. Binds acidic phospholipids. The sequence is that of Chromosomal replication initiator protein DnaA from Shewanella sediminis (strain HAW-EB3).